The chain runs to 251 residues: Ubiquinone/menaquinone biosynthesis C-methyltransferase UbiE (251 aa).

S-adenosyl-L-methionine-binding residues include threonine 74, aspartate 92, and serine 132.

It belongs to the class I-like SAM-binding methyltransferase superfamily. MenG/UbiE family.

The enzyme catalyses a 2-demethylmenaquinol + S-adenosyl-L-methionine = a menaquinol + S-adenosyl-L-homocysteine + H(+). It catalyses the reaction a 2-methoxy-6-(all-trans-polyprenyl)benzene-1,4-diol + S-adenosyl-L-methionine = a 5-methoxy-2-methyl-3-(all-trans-polyprenyl)benzene-1,4-diol + S-adenosyl-L-homocysteine + H(+). It participates in quinol/quinone metabolism; menaquinone biosynthesis; menaquinol from 1,4-dihydroxy-2-naphthoate: step 2/2. It functions in the pathway cofactor biosynthesis; ubiquinone biosynthesis. Functionally, methyltransferase required for the conversion of demethylmenaquinol (DMKH2) to menaquinol (MKH2) and the conversion of 2-polyprenyl-6-methoxy-1,4-benzoquinol (DDMQH2) to 2-polyprenyl-3-methyl-6-methoxy-1,4-benzoquinol (DMQH2). This chain is Ubiquinone/menaquinone biosynthesis C-methyltransferase UbiE, found in Rubrivivax gelatinosus (strain NBRC 100245 / IL144).